Consider the following 106-residue polypeptide: ATP-dependent Clp protease adapter protein ClpS (106 aa).

It belongs to the ClpS family. Binds to the N-terminal domain of the chaperone ClpA.

Involved in the modulation of the specificity of the ClpAP-mediated ATP-dependent protein degradation. The polypeptide is ATP-dependent Clp protease adapter protein ClpS (Methylococcus capsulatus (strain ATCC 33009 / NCIMB 11132 / Bath)).